The following is a 295-amino-acid chain: Ethanolamine ammonia-lyase small subunit (295 aa).

Adenosylcob(III)alamin is bound by residues valine 207, glutamate 228, and cysteine 258.

This sequence belongs to the EutC family. In terms of assembly, the basic unit is a heterodimer which dimerizes to form tetramers. The heterotetramers trimerize; 6 large subunits form a core ring with 6 small subunits projecting outwards. Adenosylcob(III)alamin serves as cofactor.

It is found in the bacterial microcompartment. The catalysed reaction is ethanolamine = acetaldehyde + NH4(+). It participates in amine and polyamine degradation; ethanolamine degradation. Its function is as follows. Catalyzes the deamination of various vicinal amino-alcohols to oxo compounds. Allows this organism to utilize ethanolamine as the sole source of nitrogen and carbon in the presence of external vitamin B12. The chain is Ethanolamine ammonia-lyase small subunit from Escherichia coli (strain 55989 / EAEC).